Here is a 485-residue protein sequence, read N- to C-terminus: Probable trichothecene esterase SAT6 (485 aa).

Residues 1–23 (MPQDPNTTLQMSSSKPSLSDLSV) form a disordered region. Low complexity predominate over residues 9 to 23 (LQMSSSKPSLSDLSV). Residues Ser-262, Asp-406, and His-438 each act as charge relay system in the active site.

It belongs to the AB hydrolase superfamily. Lipase family.

It participates in mycotoxin biosynthesis. In terms of biological role, probable trichothecene esterase; part of the satratoxin SC1 cluster involved in the biosynthesis of satratoxins, trichothecene mycotoxins that are associated with human food poisonings. Satratoxins are suggested to be made by products of multiple gene clusters (SC1, SC2 and SC3) that encode 21 proteins in all, including polyketide synthases, acetyltransferases, and other enzymes expected to modify the trichothecene skeleton. SC1 encodes 10 proteins, SAT1 to SAT10. The largest are SAT8, which encodes a putative polyketide synthase (PKS) with a conventional non-reducing architecture, and SAT10, a putative protein containing four ankyrin repeats and thus may be involved in protein scaffolding. The putative short-chain reductase SAT3 may assist the PKS in some capacity. SAT6 contains a secretory lipase domain and acts probably as a trichothecene esterase. SAT5 encodes a putative acetyltransferase, and so, with SAT6, may affect endogenous protection from toxicity. The probable transcription factor SAT9 may regulate the expression of the SC1 cluster. SC2 encodes proteins SAT11 to SAT16, the largest of which encodes the putative reducing PKS SAT13. SAT11 is a cytochrome P450 monooxygenase, while SAT14 and SAT16 are probable acetyltransferases. The SC2 cluster may be regulated by the transcription factor SAT15. SC3 is a small cluster that encodes 5 proteins, SAT17 to SAT21. SAT21 is a putative MFS-type transporter which may have a role in exporting secondary metabolites. The four other proteins putatively encoded in SC3 include the taurine hydroxylase-like protein SAT17, the O-methyltransferase SAT18, the acetyltransferase SAT19, and the Cys6-type zinc finger SAT20, the latter being probably involved in regulation of SC3 expression. The chain is Probable trichothecene esterase SAT6 from Stachybotrys chartarum (strain CBS 109288 / IBT 7711) (Toxic black mold).